Consider the following 822-residue polypeptide: Phenylalanine--tRNA ligase beta subunit (822 aa).

The region spanning 39–150 (ADRLVGFRTA…ETAPIGESYA (112 aa)) is the tRNA-binding domain. In terms of domain architecture, B5 spans 399–502 (DWKRTARLRF…RLYGLDNVPA (104 aa)). Positions 486, 489, and 490 each coordinate Mg(2+). Residues 728-821 (SPLQPVRRDF…VLKATGAVLR (94 aa)) form the FDX-ACB domain.

It belongs to the phenylalanyl-tRNA synthetase beta subunit family. Type 1 subfamily. As to quaternary structure, tetramer of two alpha and two beta subunits. Mg(2+) is required as a cofactor.

The protein resides in the cytoplasm. It catalyses the reaction tRNA(Phe) + L-phenylalanine + ATP = L-phenylalanyl-tRNA(Phe) + AMP + diphosphate + H(+). The chain is Phenylalanine--tRNA ligase beta subunit from Gluconobacter oxydans (strain 621H) (Gluconobacter suboxydans).